Consider the following 483-residue polypeptide: NADH-quinone oxidoreductase subunit N (483 aa).

A run of 13 helical transmembrane segments spans residues Pro13–Phe33, Gly45–Val65, Phe80–Ile100, Pro111–Ile131, Phe165–Phe185, Ile205–Val225, Ala244–Val264, Ile276–Ser296, Leu301–Thr321, Val328–Ala348, Ala373–Phe393, Leu407–Val429, and Val452–Leu472.

Belongs to the complex I subunit 2 family. In terms of assembly, NDH-1 is composed of 14 different subunits. Subunits NuoA, H, J, K, L, M, N constitute the membrane sector of the complex.

The protein localises to the cell inner membrane. It carries out the reaction a quinone + NADH + 5 H(+)(in) = a quinol + NAD(+) + 4 H(+)(out). In terms of biological role, NDH-1 shuttles electrons from NADH, via FMN and iron-sulfur (Fe-S) centers, to quinones in the respiratory chain. The immediate electron acceptor for the enzyme in this species is believed to be ubiquinone. Couples the redox reaction to proton translocation (for every two electrons transferred, four hydrogen ions are translocated across the cytoplasmic membrane), and thus conserves the redox energy in a proton gradient. In Parvibaculum lavamentivorans (strain DS-1 / DSM 13023 / NCIMB 13966), this protein is NADH-quinone oxidoreductase subunit N.